A 1000-amino-acid chain; its full sequence is Ribosome assembly protein 1 (1000 aa).

A tr-type G domain is found at 17–246; the sequence is ENIRNFTLLA…YEKKLGLKQK (230 aa). GTP is bound by residues 26-33, 100-104, and 154-157; these read AHVDHGKT, DSPGH, and NKMD.

The protein belongs to the TRAFAC class translation factor GTPase superfamily. Classic translation factor GTPase family.

Its subcellular location is the cytoplasm. The catalysed reaction is GTP + H2O = GDP + phosphate + H(+). GTPase activity is stimulated in the presence of 60S subunits. In terms of biological role, GTPase involved in the biogenesis of the 60S ribosomal subunit and translational activation of ribosomes. Together with sdo1, may trigger the GTP-dependent release of tif6 from 60S pre-ribosomes in the cytoplasm, thereby activating ribosomes for translation competence by allowing 80S ribosome assembly and facilitating tif6 recycling to the nucleus, where it is required for 60S rRNA processing and nuclear export. Inhibits GTPase activity of ribosome-bound EF-2. The sequence is that of Ribosome assembly protein 1 (ria1) from Schizosaccharomyces pombe (strain 972 / ATCC 24843) (Fission yeast).